The sequence spans 96 residues: ESAT-6-like protein EsxR (96 aa).

The protein belongs to the WXG100 family. ESAT-6 subfamily.

The protein localises to the secreted. This Mycobacterium leprae (strain TN) protein is ESAT-6-like protein EsxR.